A 258-amino-acid chain; its full sequence is ATP synthase subunit a (258 aa).

The next 5 membrane-spanning stretches (helical) occupy residues 38–58, 94–114, 118–138, 193–213, and 215–235; these read KPVW…YVGA, WFPY…IGLF, YPVT…FVLT, ILAG…FGLP, and AFVS…VAVI.

Belongs to the ATPase A chain family. As to quaternary structure, F-type ATPases have 2 components, CF(1) - the catalytic core - and CF(0) - the membrane proton channel. CF(1) has five subunits: alpha(3), beta(3), gamma(1), delta(1), epsilon(1). CF(0) has three main subunits: a(1), b(2) and c(9-12). The alpha and beta chains form an alternating ring which encloses part of the gamma chain. CF(1) is attached to CF(0) by a central stalk formed by the gamma and epsilon chains, while a peripheral stalk is formed by the delta and b chains.

The protein resides in the cell membrane. Key component of the proton channel; it plays a direct role in the translocation of protons across the membrane. This Rubrobacter xylanophilus (strain DSM 9941 / JCM 11954 / NBRC 16129 / PRD-1) protein is ATP synthase subunit a.